Consider the following 393-residue polypeptide: S-adenosylmethionine synthase 1 (393 aa).

Position 9 (Glu-9) interacts with Mg(2+). Residue His-15 coordinates ATP. A K(+)-binding site is contributed by Glu-43. L-methionine-binding residues include Glu-56 and Gln-99. Residues 167-169, 235-238, Asp-246, 252-253, Ala-269, Lys-273, and Lys-277 each bind ATP; these read DGK, SGRF, and RK. Asp-246 contacts L-methionine. Position 277 (Lys-277) interacts with L-methionine.

Belongs to the AdoMet synthase family. Homotetramer. Requires Mn(2+) as cofactor. Mg(2+) is required as a cofactor. Co(2+) serves as cofactor. It depends on K(+) as a cofactor. In terms of tissue distribution, mostly expressed in stems.

Its subcellular location is the cytoplasm. The enzyme catalyses L-methionine + ATP + H2O = S-adenosyl-L-methionine + phosphate + diphosphate. The protein operates within amino-acid biosynthesis; S-adenosyl-L-methionine biosynthesis; S-adenosyl-L-methionine from L-methionine: step 1/1. Its function is as follows. Catalyzes the formation of S-adenosylmethionine from methionine and ATP. The reaction comprises two steps that are both catalyzed by the same enzyme: formation of S-adenosylmethionine (AdoMet) and triphosphate, and subsequent hydrolysis of the triphosphate. This is S-adenosylmethionine synthase 1 (SAM1) from Solanum lycopersicum (Tomato).